Here is a 376-residue protein sequence, read N- to C-terminus: Glucose-1-phosphate adenylyltransferase (376 aa).

Alpha-D-glucose 1-phosphate-binding positions include Tyr-101, Gly-166, 181 to 182 (EK), and Ser-192.

The protein belongs to the bacterial/plant glucose-1-phosphate adenylyltransferase family. In terms of assembly, homotetramer.

It carries out the reaction alpha-D-glucose 1-phosphate + ATP + H(+) = ADP-alpha-D-glucose + diphosphate. It participates in glycan biosynthesis; glycogen biosynthesis. Its function is as follows. Involved in the biosynthesis of ADP-glucose, a building block required for the elongation reactions to produce glycogen. Catalyzes the reaction between ATP and alpha-D-glucose 1-phosphate (G1P) to produce pyrophosphate and ADP-Glc. The chain is Glucose-1-phosphate adenylyltransferase from Bacillus cereus (strain ATCC 14579 / DSM 31 / CCUG 7414 / JCM 2152 / NBRC 15305 / NCIMB 9373 / NCTC 2599 / NRRL B-3711).